A 247-amino-acid polypeptide reads, in one-letter code: UPF0259 membrane protein BU276 (247 aa).

6 helical membrane-spanning segments follow: residues 20-40, 85-105, 114-134, 137-157, 188-208, and 218-238; these read IGAI…IDMF, IMES…LISV, IVSS…LNFL, FIIQ…SIIL, IIGP…MLLA, and LFLI…IYLF.

It belongs to the UPF0259 family.

The protein localises to the cell membrane. This chain is UPF0259 membrane protein BU276, found in Buchnera aphidicola subsp. Acyrthosiphon pisum (strain APS) (Acyrthosiphon pisum symbiotic bacterium).